Reading from the N-terminus, the 199-residue chain is Pyridoxal 5'-phosphate synthase subunit PdxT (199 aa).

52 to 54 (GES) is a binding site for L-glutamine. C84 (nucleophile) is an active-site residue. Residues R115 and 143-144 (IR) contribute to the L-glutamine site. Residues H179 and E181 each act as charge relay system in the active site.

Belongs to the glutaminase PdxT/SNO family. In terms of assembly, in the presence of PdxS, forms a dodecamer of heterodimers. Only shows activity in the heterodimer.

It carries out the reaction aldehydo-D-ribose 5-phosphate + D-glyceraldehyde 3-phosphate + L-glutamine = pyridoxal 5'-phosphate + L-glutamate + phosphate + 3 H2O + H(+). The enzyme catalyses L-glutamine + H2O = L-glutamate + NH4(+). It functions in the pathway cofactor biosynthesis; pyridoxal 5'-phosphate biosynthesis. Catalyzes the hydrolysis of glutamine to glutamate and ammonia as part of the biosynthesis of pyridoxal 5'-phosphate. The resulting ammonia molecule is channeled to the active site of PdxS. In Methanosarcina mazei (strain ATCC BAA-159 / DSM 3647 / Goe1 / Go1 / JCM 11833 / OCM 88) (Methanosarcina frisia), this protein is Pyridoxal 5'-phosphate synthase subunit PdxT.